The primary structure comprises 475 residues: Ribulose bisphosphate carboxylase large chain (475 aa).

A propeptide spanning residues 1-2 (MS) is cleaved from the precursor. Pro-3 bears the N-acetylproline mark. 2 residues coordinate substrate: Asn-123 and Thr-173. The Proton acceptor role is filled by Lys-175. Lys-177 is a binding site for substrate. Residues Lys-201, Asp-203, and Glu-204 each coordinate Mg(2+). At Lys-201 the chain carries N6-carboxylysine. His-294 functions as the Proton acceptor in the catalytic mechanism. Residues Arg-295, His-327, and Ser-379 each coordinate substrate.

This sequence belongs to the RuBisCO large chain family. Type I subfamily. In terms of assembly, heterohexadecamer of 8 large chains and 8 small chains; disulfide-linked. The disulfide link is formed within the large subunit homodimers. Mg(2+) serves as cofactor. In terms of processing, the disulfide bond which can form in the large chain dimeric partners within the hexadecamer appears to be associated with oxidative stress and protein turnover.

It localises to the plastid. The protein resides in the chloroplast. The enzyme catalyses 2 (2R)-3-phosphoglycerate + 2 H(+) = D-ribulose 1,5-bisphosphate + CO2 + H2O. It catalyses the reaction D-ribulose 1,5-bisphosphate + O2 = 2-phosphoglycolate + (2R)-3-phosphoglycerate + 2 H(+). Functionally, ruBisCO catalyzes two reactions: the carboxylation of D-ribulose 1,5-bisphosphate, the primary event in carbon dioxide fixation, as well as the oxidative fragmentation of the pentose substrate in the photorespiration process. Both reactions occur simultaneously and in competition at the same active site. This Welwitschia mirabilis (Tree tumbo) protein is Ribulose bisphosphate carboxylase large chain.